A 202-amino-acid chain; its full sequence is ATP synthase subunit b 1 (202 aa).

Residues Ile17–Gly37 traverse the membrane as a helical segment.

Belongs to the ATPase B chain family. As to quaternary structure, F-type ATPases have 2 components, F(1) - the catalytic core - and F(0) - the membrane proton channel. F(1) has five subunits: alpha(3), beta(3), gamma(1), delta(1), epsilon(1). F(0) has three main subunits: a(1), b(2) and c(10-14). The alpha and beta chains form an alternating ring which encloses part of the gamma chain. F(1) is attached to F(0) by a central stalk formed by the gamma and epsilon chains, while a peripheral stalk is formed by the delta and b chains.

Its subcellular location is the cell inner membrane. Functionally, f(1)F(0) ATP synthase produces ATP from ADP in the presence of a proton or sodium gradient. F-type ATPases consist of two structural domains, F(1) containing the extramembraneous catalytic core and F(0) containing the membrane proton channel, linked together by a central stalk and a peripheral stalk. During catalysis, ATP synthesis in the catalytic domain of F(1) is coupled via a rotary mechanism of the central stalk subunits to proton translocation. In terms of biological role, component of the F(0) channel, it forms part of the peripheral stalk, linking F(1) to F(0). The polypeptide is ATP synthase subunit b 1 (Syntrophus aciditrophicus (strain SB)).